Here is a 364-residue protein sequence, read N- to C-terminus: Aminomethyltransferase (364 aa).

This sequence belongs to the GcvT family. The glycine cleavage system is composed of four proteins: P, T, L and H.

It carries out the reaction N(6)-[(R)-S(8)-aminomethyldihydrolipoyl]-L-lysyl-[protein] + (6S)-5,6,7,8-tetrahydrofolate = N(6)-[(R)-dihydrolipoyl]-L-lysyl-[protein] + (6R)-5,10-methylene-5,6,7,8-tetrahydrofolate + NH4(+). In terms of biological role, the glycine cleavage system catalyzes the degradation of glycine. The protein is Aminomethyltransferase of Escherichia coli O6:H1 (strain CFT073 / ATCC 700928 / UPEC).